The chain runs to 146 residues: D-aminoacyl-tRNA deacylase (146 aa).

A Gly-cisPro motif, important for rejection of L-amino acids motif is present at residues 137-138; it reads GP.

Belongs to the DTD family. In terms of assembly, homodimer.

The protein localises to the cytoplasm. It catalyses the reaction glycyl-tRNA(Ala) + H2O = tRNA(Ala) + glycine + H(+). It carries out the reaction a D-aminoacyl-tRNA + H2O = a tRNA + a D-alpha-amino acid + H(+). In terms of biological role, an aminoacyl-tRNA editing enzyme that deacylates mischarged D-aminoacyl-tRNAs. Also deacylates mischarged glycyl-tRNA(Ala), protecting cells against glycine mischarging by AlaRS. Acts via tRNA-based rather than protein-based catalysis; rejects L-amino acids rather than detecting D-amino acids in the active site. By recycling D-aminoacyl-tRNA to D-amino acids and free tRNA molecules, this enzyme counteracts the toxicity associated with the formation of D-aminoacyl-tRNA entities in vivo and helps enforce protein L-homochirality. The chain is D-aminoacyl-tRNA deacylase from Bacillus cereus (strain B4264).